The chain runs to 348 residues: Fe-S cluster assembly protein DRE2 (348 aa).

The segment at 1 to 162 (MSQYKTGLLL…KKASSSTSNL (162 aa)) is N-terminal SAM-like domain. Residues 137–170 (KTNNTKLQSGSKLPTFKKASSSTSNLPSFKKADH) are disordered. Residues 144-163 (QSGSKLPTFKKASSSTSNLP) show a composition bias toward polar residues. Residues 163–242 (PSFKKADHSR…EEELIDEDGS (80 aa)) form a linker region. Serine 206 is modified (phosphoserine). The [2Fe-2S] cluster site is built by cysteine 252, cysteine 263, cysteine 266, and cysteine 268. A fe-S binding site A region spans residues 252–268 (CGKSKTKKKKACKDCTC). Cysteine 311, cysteine 314, cysteine 322, and cysteine 325 together coordinate [4Fe-4S] cluster. 2 consecutive short sequence motifs (cx2C motif) follow at residues 311–314 (CGSC) and 322–325 (CSGC). The interval 311–325 (CGSCSLGDAFRCSGC) is fe-S binding site B.

The protein belongs to the anamorsin family. In terms of assembly, monomer. Interacts with TAH18. Interacts with MIA40. Requires [2Fe-2S] cluster as cofactor. It depends on [4Fe-4S] cluster as a cofactor.

The protein resides in the cytoplasm. The protein localises to the mitochondrion intermembrane space. Its function is as follows. Component of the cytosolic iron-sulfur (Fe-S) protein assembly (CIA) machinery required for the maturation of extramitochondrial Fe-S proteins. Part of an electron transfer chain functioning in an early step of cytosolic Fe-S biogenesis, facilitating the de novo assembly of a [4Fe-4S] cluster on the scaffold complex CFD1-NBP35. Electrons are transferred to DRE2 from NADPH via the FAD- and FMN-containing protein TAH18. TAH18-DRE2 are also required for the assembly of the diferric tyrosyl radical cofactor of ribonucleotide reductase (RNR), probably by providing electrons for reduction during radical cofactor maturation in the catalytic small subunit RNR2. The chain is Fe-S cluster assembly protein DRE2 from Saccharomyces cerevisiae (strain Lalvin EC1118 / Prise de mousse) (Baker's yeast).